The primary structure comprises 295 residues: Small ribosomal subunit protein uS2 (295 aa).

N-acetylserine is present on Ser2. Ser43 bears the Phosphoserine mark. Lys52 is modified (N6-acetyllysine). The interval 54 to 113 is interaction with PPP1R16B; that stretch reads TWEKLLLAARAIVAIENPADVSVISSRNTGQRAVLKFAAATGATPIAGRFTPGTFTNQIQ. At Lys89 the chain carries N6-acetyllysine; alternate. Lys89 is covalently cross-linked (Glycyl lysine isopeptide (Lys-Gly) (interchain with G-Cter in SUMO2); alternate). The residue at position 97 (Thr97) is a Phosphothreonine. 2 laminin-binding regions span residues 161-180 and 205-229; these read IPCN…MLAR and RDPE…EFQG. [DE]-W-[ST] repeat units lie at residues 230–232, 247–249, 266–268, 275–277, and 293–295; these read EWT, DWS, and EWS. The laminin-binding stretch occupies residues 242 to 295; that stretch reads QPEVADWSEGVQVPSVPIQQFPTEDWSAQPATEDWSAAPTAQATEWVGATTEWS. The segment at 266–295 is disordered; it reads DWSAQPATEDWSAAPTAQATEWVGATTEWS.

This sequence belongs to the universal ribosomal protein uS2 family. As to quaternary structure, monomer (37LRP) and homodimer (67LR). Component of the small ribosomal subunit. Mature ribosomes consist of a small (40S) and a large (60S) subunit. The 40S subunit contains about 33 different proteins and 1 molecule of RNA (18S). The 60S subunit contains about 49 different proteins and 3 molecules of RNA (28S, 5.8S and 5S). Interacts with RPS21. Interacts with several laminins including at least LAMB1. Interacts with MDK. The mature dimeric form interacts with PPP1R16B (via its fourth ankyrin repeat). Interacts with PPP1CA only in the presence of PPP1R16B. In terms of processing, acylated. Acylation may be a prerequisite for conversion of the monomeric 37 kDa laminin receptor precursor (37LRP) to the mature dimeric 67 kDa laminin receptor (67LR), and may provide a mechanism for membrane association. Post-translationally, cleaved by stromelysin-3 (ST3) at the cell surface. Cleavage by stromelysin-3 may be a mechanism to alter cell-extracellular matrix interactions.

The protein resides in the cell membrane. It is found in the cytoplasm. Its subcellular location is the nucleus. Functionally, required for the assembly and/or stability of the 40S ribosomal subunit. Required for the processing of the 20S rRNA-precursor to mature 18S rRNA in a late step of the maturation of 40S ribosomal subunits. Also functions as a cell surface receptor for laminin. Plays a role in cell adhesion to the basement membrane and in the consequent activation of signaling transduction pathways. May play a role in cell fate determination and tissue morphogenesis. Also acts as a receptor for several other ligands, including the pathogenic prion protein, viruses, and bacteria. Acts as a PPP1R16B-dependent substrate of PPP1CA. The polypeptide is Small ribosomal subunit protein uS2 (Chlorocebus aethiops (Green monkey)).